We begin with the raw amino-acid sequence, 452 residues long: Pup--protein ligase (452 aa).

Position 9 (E9) interacts with Mg(2+). Residue R53 participates in ATP binding. Y55 is a binding site for Mg(2+). D57 functions as the Proton acceptor in the catalytic mechanism. Position 63 (E63) interacts with Mg(2+). Positions 66 and 419 each coordinate ATP.

This sequence belongs to the Pup ligase/Pup deamidase family. Pup-conjugating enzyme subfamily.

The enzyme catalyses ATP + [prokaryotic ubiquitin-like protein]-L-glutamate + [protein]-L-lysine = ADP + phosphate + N(6)-([prokaryotic ubiquitin-like protein]-gamma-L-glutamyl)-[protein]-L-lysine.. Its pathway is protein degradation; proteasomal Pup-dependent pathway. It functions in the pathway protein modification; protein pupylation. Functionally, catalyzes the covalent attachment of the prokaryotic ubiquitin-like protein modifier Pup to the proteasomal substrate proteins, thereby targeting them for proteasomal degradation. This tagging system is termed pupylation. The ligation reaction involves the side-chain carboxylate of the C-terminal glutamate of Pup and the side-chain amino group of a substrate lysine. The sequence is that of Pup--protein ligase from Geodermatophilus obscurus (strain ATCC 25078 / DSM 43160 / JCM 3152 / CCUG 61914 / KCC A-0152 / KCTC 9177 / NBRC 13315 / NRRL B-3577 / G-20).